The chain runs to 193 residues: MKIVNTAFHISVSALSGLPEDSFPEIVFAGRSNVGKSTLLNSLTGVKGLAKTSATPGKTRLINYFLINRDVYFVDLPGYGYAAVGHAEKALWGNLLSSYIIQRRSISLVVLLLDSRHPAMQSDRAMISFLESHDRPYGIVLTKYDKLTQKEKVQTGRIMESCAAKAKFIVNYSSFSGKGKSELLAHFDQYICQ.

The 172-residue stretch at 22–193 folds into the EngB-type G domain; that stretch reads SFPEIVFAGR…LAHFDQYICQ (172 aa). GTP contacts are provided by residues 30-37, 57-61, 75-78, 142-145, and 172-174; these read GRSNVGKS, GKTRL, DLPG, TKYD, and YSS. Mg(2+)-binding residues include Ser37 and Thr59.

This sequence belongs to the TRAFAC class TrmE-Era-EngA-EngB-Septin-like GTPase superfamily. EngB GTPase family. Mg(2+) serves as cofactor.

Functionally, necessary for normal cell division and for the maintenance of normal septation. The protein is Probable GTP-binding protein EngB of Pelodictyon phaeoclathratiforme (strain DSM 5477 / BU-1).